The chain runs to 521 residues: MDKTASLTSQDAEKHDPDALRKERATDPPDLFEHGALDPVYQAKAHLIASAIQEIGMGKYQWGLFVVAGFGWFSDSVWPLMGSLILSPVVNEFQFNSPFLSLALNAGLLAGAIFWAFGCDIWGRRWSFNLSLLIAGAFGLAAGGTQNFVALACLFAVVGFGVGGNMPVDSAVFLDFVPGSYQYLLTILSIWWSIGQLVASLIAWPLIANFSCPIGSTTCTRADNMGWRYLLFTLGGMTLLLWAIRFFVFPLMESPRFLVGRGRDAEAIAVIQRIAQFNGRPSSLTLEELAMVAEKAAPKDAVATQRRQVLSQSSDFSTDHVKGLFATPKLAWSTSLLIALWGIIGLASTLYNSFLPFLLANRGAEFGDSSYFITYRNQVIIAVLGVPGAFLAGWAVEQPYLGRKGTLAISAGLTGVFLFATTTARSSNALLGWNCGYAFHSNIMYGVLYAISPEVFPAKDRGTGNGLTATATRVFGLIAPVIALYANLSTAVPVYVSGALIIASGAMALLLPYEPRGRASL.

The span at 1–10 (MDKTASLTSQ) shows a compositional bias: polar residues. Residues 1–29 (MDKTASLTSQDAEKHDPDALRKERATDPP) are disordered. The span at 11 to 29 (DAEKHDPDALRKERATDPP) shows a compositional bias: basic and acidic residues. 5 helical membrane-spanning segments follow: residues 62–82 (WGLF…PLMG), 99–119 (FLSL…AFGC), 126–146 (WSFN…GGTQ), 148–168 (FVAL…NMPV), and 187–207 (ILSI…WPLI). A glycan (N-linked (GlcNAc...) asparagine) is linked at N209. Helical transmembrane passes span 229 to 249 (YLLF…FFVF), 330 to 350 (LAWS…ASTL), 379 to 399 (VIIA…VEQP), 404 to 424 (KGTL…TTTA), 431 to 451 (LGWN…LYAI), and 466 to 486 (GLTA…ALYA). N-linked (GlcNAc...) asparagine glycosylation occurs at N487. Residues 491 to 511 (AVPVYVSGALIIASGAMALLL) form a helical membrane-spanning segment.

It belongs to the major facilitator superfamily.

It localises to the membrane. Functionally, major facilitator transporter probably involved in siderophore basidioferrin transmembrane transport. The sequence is that of MFS siderochrome iron transporter 1 from Ceriporiopsis subvermispora (strain B) (White-rot fungus).